We begin with the raw amino-acid sequence, 444 residues long: Protein CLP1 homolog (444 aa).

ATP is bound by residues Glu33, Lys72, and 140–145; that span reads DSGKST.

This sequence belongs to the Clp1 family. Clp1 subfamily. In terms of assembly, interacts with PCFS4 and SYM5. Forms a complex with cleavage and polyadenylation specificity factor (CPSF) subunits CPSF30, CPSF100, PCFS1, PCFS4, PCFS5, CPSF160 and FY.

The protein resides in the nucleus. In terms of biological role, required for endonucleolytic cleavage during polyadenylation-dependent pre-mRNA 3'-end formation. Functions in gametophyte, embryo and postembryotic development. This chain is Protein CLP1 homolog (CLPS3), found in Arabidopsis thaliana (Mouse-ear cress).